Reading from the N-terminus, the 355-residue chain is Plasmodial-specific protein LAV1-2 (355 aa).

2 consecutive EF-hand domains span residues 151-186 and 217-252; these read EDTN…YADT and NDLA…LGFD. 20 residues coordinate Ca(2+): aspartate 230, asparagine 232, asparagine 234, threonine 236, glutamate 241, aspartate 265, aspartate 267, serine 269, aspartate 271, glutamate 276, aspartate 295, aspartate 297, serine 299, glutamine 301, glutamate 306, aspartate 332, aspartate 334, serine 336, serine 338, and glutamate 343. 2 EF-hand domains span residues 282-317 and 319-354; these read LCLL…AHIP and SARK…MFHD.

In Physarum polycephalum (Slime mold), this protein is Plasmodial-specific protein LAV1-2.